The following is a 360-amino-acid chain: Pyrimidine monooxygenase RutA (360 aa).

Residues 49-50, asparagine 115, glutamate 124, 140-141, and serine 190 contribute to the FMN site; these read IK and RY.

Belongs to the NtaA/SnaA/DszA monooxygenase family. RutA subfamily.

The catalysed reaction is uracil + FMNH2 + NADH + O2 = (Z)-3-ureidoacrylate + FMN + NAD(+) + H2O + H(+). The enzyme catalyses thymine + FMNH2 + NADH + O2 = (Z)-2-methylureidoacrylate + FMN + NAD(+) + H2O + H(+). Catalyzes the pyrimidine ring opening between N-3 and C-4 by an unusual flavin hydroperoxide-catalyzed mechanism, adding oxygen atoms in the process to yield ureidoacrylate peracid, that immediately reacts with FMN forming ureidoacrylate and FMN-N(5)-oxide. The FMN-N(5)-oxide reacts spontaneously with NADH to produce FMN. Requires the flavin reductase RutF to regenerate FMN in vivo. This chain is Pyrimidine monooxygenase RutA, found in Bradyrhizobium sp. (strain BTAi1 / ATCC BAA-1182).